The primary structure comprises 270 residues: Glutamate racemase (270 aa).

Residues 7-8 (DS) and 39-40 (YG) each bind substrate. The Proton donor/acceptor role is filled by Cys-70. 71–72 (NT) is a substrate binding site. Cys-194 functions as the Proton donor/acceptor in the catalytic mechanism. 195 to 196 (TH) provides a ligand contact to substrate.

This sequence belongs to the aspartate/glutamate racemases family.

It carries out the reaction L-glutamate = D-glutamate. It functions in the pathway cell wall biogenesis; peptidoglycan biosynthesis. Provides the (R)-glutamate required for cell wall biosynthesis. In Jannaschia sp. (strain CCS1), this protein is Glutamate racemase.